An 82-amino-acid polypeptide reads, in one-letter code: Acyl carrier protein (82 aa).

The Carrier domain occupies 4–79; it reads PEMESRLKKI…DALNYIEQKL (76 aa). Serine 39 bears the O-(pantetheine 4'-phosphoryl)serine mark.

The protein belongs to the acyl carrier protein (ACP) family. Post-translationally, 4'-phosphopantetheine is transferred from CoA to a specific serine of apo-ACP by AcpS. This modification is essential for activity because fatty acids are bound in thioester linkage to the sulfhydryl of the prosthetic group.

The protein resides in the cytoplasm. It participates in lipid metabolism; fatty acid biosynthesis. Functionally, carrier of the growing fatty acid chain in fatty acid biosynthesis. This Roseiflexus sp. (strain RS-1) protein is Acyl carrier protein.